The following is a 353-amino-acid chain: Uroporphyrinogen decarboxylase (353 aa).

Substrate contacts are provided by residues 30–34 (RQAGR), D79, Y154, S209, and H332.

The protein belongs to the uroporphyrinogen decarboxylase family. As to quaternary structure, homodimer.

It is found in the cytoplasm. It carries out the reaction uroporphyrinogen III + 4 H(+) = coproporphyrinogen III + 4 CO2. It participates in porphyrin-containing compound metabolism; protoporphyrin-IX biosynthesis; coproporphyrinogen-III from 5-aminolevulinate: step 4/4. Catalyzes the decarboxylation of four acetate groups of uroporphyrinogen-III to yield coproporphyrinogen-III. This Mycolicibacterium smegmatis (strain ATCC 700084 / mc(2)155) (Mycobacterium smegmatis) protein is Uroporphyrinogen decarboxylase.